The following is a 566-amino-acid chain: Nitrate/nitrite sensor protein NarQ (566 aa).

The Cytoplasmic segment spans residues 1 to 13 (MIVKRPVSASLAR). A helical membrane pass occupies residues 14-34 (AFFYIVLLSILSTGIALLTLA). The Periplasmic segment spans residues 35–146 (SSLRDAEAIN…LALQHYAERK (112 aa)). Residues 147–167 (MLLVVAISLAGGIGIFTLVFF) form a helical membrane-spanning segment. At 168–566 (TLRRIRHQVV…SAEGEESQLM (399 aa)) the chain is on the cytoplasmic side. Positions 174–227 (HQVVAPLNQLVTASQRIEHGQFDSPPLDTNLPNELGLLAKTFNQMSSELHKLYR) constitute an HAMP domain. Residues 364–559 (TIARELHDSL…LVSISFRSAE (196 aa)) form the Histidine kinase domain. Histidine 370 carries the phosphohistidine; by autocatalysis modification.

The protein localises to the cell inner membrane. The catalysed reaction is ATP + protein L-histidine = ADP + protein N-phospho-L-histidine.. Acts as a sensor for nitrate/nitrite and transduces signal of nitrate/nitrite availability to the NarL/NarP proteins. NarQ probably activates NarL and NarP by phosphorylation. NarQ probably negatively regulates the NarL protein by dephosphorylation. In Escherichia coli (strain K12), this protein is Nitrate/nitrite sensor protein NarQ (narQ).